Reading from the N-terminus, the 409-residue chain is Gamma-glutamyl phosphate reductase (409 aa).

The protein belongs to the gamma-glutamyl phosphate reductase family.

It is found in the cytoplasm. The catalysed reaction is L-glutamate 5-semialdehyde + phosphate + NADP(+) = L-glutamyl 5-phosphate + NADPH + H(+). The protein operates within amino-acid biosynthesis; L-proline biosynthesis; L-glutamate 5-semialdehyde from L-glutamate: step 2/2. Catalyzes the NADPH-dependent reduction of L-glutamate 5-phosphate into L-glutamate 5-semialdehyde and phosphate. The product spontaneously undergoes cyclization to form 1-pyrroline-5-carboxylate. In Koribacter versatilis (strain Ellin345), this protein is Gamma-glutamyl phosphate reductase.